The primary structure comprises 406 residues: Anthranilate 1,2-dioxygenase system ferredoxin--NAD(+) reductase component (406 aa).

Residue 5–37 (PFVIVGAGHAARRTAEALRARDADAPIVMIGAE) participates in FAD binding. 152-161 (GGGFIGLEVA) contributes to the NAD(+) binding site.

It belongs to the FAD-dependent oxidoreductase family. In terms of assembly, part of a multicomponent enzyme system composed of a reductase (AndAa), a ferredoxin (AndAb) and a two-subunit oxygenase component (AndAc and AndAd). The cofactor is FAD.

It catalyses the reaction 2 reduced [2Fe-2S]-[ferredoxin] + NAD(+) + H(+) = 2 oxidized [2Fe-2S]-[ferredoxin] + NADH. Its pathway is aromatic compound metabolism; anthranilate degradation via hydroxylation; catechol from anthranilate: step 1/1. Part of the multicomponent anthranilate dioxygenase, that converts anthranilate to catechol. Probably transfers electrons from ferredoxin (AndAb) to NADH. This Burkholderia cepacia (Pseudomonas cepacia) protein is Anthranilate 1,2-dioxygenase system ferredoxin--NAD(+) reductase component.